Reading from the N-terminus, the 162-residue chain is Phosphopantetheine adenylyltransferase (162 aa).

Ser11 is a substrate binding site. ATP contacts are provided by residues 11 to 12 (SF) and His19. Positions 43, 76, and 90 each coordinate substrate. ATP-binding positions include 91 to 93 (GLR), Glu101, and 126 to 132 (HLYISSS).

Belongs to the bacterial CoaD family. Homohexamer. Mg(2+) serves as cofactor.

It is found in the cytoplasm. It carries out the reaction (R)-4'-phosphopantetheine + ATP + H(+) = 3'-dephospho-CoA + diphosphate. It functions in the pathway cofactor biosynthesis; coenzyme A biosynthesis; CoA from (R)-pantothenate: step 4/5. Functionally, reversibly transfers an adenylyl group from ATP to 4'-phosphopantetheine, yielding dephospho-CoA (dPCoA) and pyrophosphate. This Streptococcus pneumoniae (strain CGSP14) protein is Phosphopantetheine adenylyltransferase.